Consider the following 348-residue polypeptide: Phosphate acyltransferase (348 aa).

Belongs to the PlsX family. In terms of assembly, homodimer. Probably interacts with PlsY.

It is found in the cytoplasm. It catalyses the reaction a fatty acyl-[ACP] + phosphate = an acyl phosphate + holo-[ACP]. It participates in lipid metabolism; phospholipid metabolism. Catalyzes the reversible formation of acyl-phosphate (acyl-PO(4)) from acyl-[acyl-carrier-protein] (acyl-ACP). This enzyme utilizes acyl-ACP as fatty acyl donor, but not acyl-CoA. The chain is Phosphate acyltransferase from Lactiplantibacillus plantarum (strain ATCC BAA-793 / NCIMB 8826 / WCFS1) (Lactobacillus plantarum).